Reading from the N-terminus, the 781-residue chain is Beta-mannosyltransferase 4 (781 aa).

Residues 1–17 (MTKSYMPLFRSPRQFKK) are Cytoplasmic-facing. Residues 18-38 (IYFILIPLILAVIILHVFFDG) form a helical membrane-spanning segment. Topologically, residues 39–781 (FNKISEYSPT…EKEDDDDIEV (743 aa)) are extracellular. Residues 640-733 (KLGDSEAAIK…AKDEDKNEDE (94 aa)) are a coiled coil. 2 stretches are compositionally biased toward basic and acidic residues: residues 663–728 (KAEK…KDED) and 736–750 (KEKN…KSEV). The segment at 663–781 (KAEKEKAEKE…EKEDDDDIEV (119 aa)) is disordered. Residues 751-781 (EENGENTNEGGEDDGDGDGEEEKEDDDDIEV) show a composition bias toward acidic residues.

This sequence belongs to the BMT family.

The protein localises to the membrane. Beta-mannosyltransferase involved in cell wall biosynthesis. Required for the elongation of beta-mannose chains on the acid-labile fraction of cell wall phosphopeptidomannan. In Candida albicans (strain SC5314 / ATCC MYA-2876) (Yeast), this protein is Beta-mannosyltransferase 4 (BMT4).